We begin with the raw amino-acid sequence, 571 residues long: Hsp70-Hsp90 organizing protein 2 (571 aa).

3 TPR repeats span residues 2–35, 37–69, and 70–103; these read ADEAKAKGNAAFSSGDFNSAVNHFTDAINLTPTN, VLFSNRSAAHASLNHYDEALSDAKKTVELKPDW, and GKGYSRLGAAHLGLNQFDEAVEAYSKGLEIDPSN. The segment at 117–137 is disordered; it reads ASRSRASAPNPFGDAFQGPEM. Residues 134–173 form the STI1 1 domain; sequence GPEMWSKLTADPSTRGLLKQPDFVNMMKEIQRNPSNLNLY. Serine 168 carries the phosphoserine modification. A compositionally biased stretch (acidic residues) spans 198-207; it reads DDMEIGEEEM. A disordered region spans residues 198 to 245; it reads DDMEIGEEEMAVPSRKEPEVEKKRKPEPEPEPEPEFGEEKQKKLKAQK. 2 stretches are compositionally biased toward basic and acidic residues: residues 211 to 225 and 234 to 245; these read SRKEPEVEKKRKPEP and GEEKQKKLKAQK. The Bipartite nuclear localization signal motif lies at 240–257; sequence KLKAQKEKELGNAAYKKK. TPR repeat units lie at residues 243–276, 278–310, 322–355, 382–415, 417–449, and 450–483; these read AQKEKELGNAAYKKKDFETAIQHYSTAMEIDDED, SYITNRAAVHLEMGKYDECIKDCDKAVERGREL, TRKGTALGKMAKVSKDYEPVIQTYQKALTEHRNP, GDEEREKGNDFFKEQKYPDAVRHYTEAIKRNPKD, RAYSNRAACYTKLGAMPEGLKDAEKCIELDPTF, and LKGYSRKGAVQFFMKEYDNAMETYQKGLEHDPNN. An STI1 2 domain is found at 520-559; it reads DPEIQNILTDPVMRQVLSDLQENPAAAQKHMQNPMIMNKI.

As to quaternary structure, co-chaperone that forms a complex with HSP70 and HSP90 and preproteins (e.g. chloroplast preproteins). Phosphorylated. Post-translationally, acetylated.

The protein resides in the cytoplasm. The protein localises to the nucleus. Mediates the association of the molecular chaperones HSP70 and HSP90. Mediates nuclear encoded chloroplast preproteins binding to HSP90 prior to chloroplastic sorting. The polypeptide is Hsp70-Hsp90 organizing protein 2 (HOP2) (Arabidopsis thaliana (Mouse-ear cress)).